A 228-amino-acid chain; its full sequence is MSQDRRYTGCNTHSNTHSAQDREKEGAVPKISGGKILPIYITGHAVLHAPAKPVTDFSGIQEIVRDMFATMFAAPGVGLAGPQIGLGLRIFVYSYTEGDTLHQGVAINPDLLIPKGVPKRQTNKQQANNSTSCDEPDREGCLSFPGYQFPLERAPQVTLSAFDENKKPFTVHATGWLARIFQHEFDHLQGTLYVDRLAQKYSGEVRQAVLNNKWGIPGKYWVPQEPKE.

Disordered stretches follow at residues 1-28 (MSQDRRYTGCNTHSNTHSAQDREKEGAV) and 116-138 (GVPKRQTNKQQANNSTSCDEPDR). Composition is skewed to polar residues over residues 8–18 (TGCNTHSNTHS) and 123–133 (NKQQANNSTSC). Positions 141 and 183 each coordinate Fe cation. Glu184 is a catalytic residue. His187 contributes to the Fe cation binding site.

The protein belongs to the polypeptide deformylase family. The cofactor is Fe(2+).

The enzyme catalyses N-terminal N-formyl-L-methionyl-[peptide] + H2O = N-terminal L-methionyl-[peptide] + formate. Functionally, removes the formyl group from the N-terminal Met of newly synthesized proteins. Requires at least a dipeptide for an efficient rate of reaction. N-terminal L-methionine is a prerequisite for activity but the enzyme has broad specificity at other positions. This Tropheryma whipplei (strain Twist) (Whipple's bacillus) protein is Peptide deformylase.